The following is a 345-amino-acid chain: uncharacterized protein (345 aa).

Belongs to the proline racemase family.

This is an uncharacterized protein from Bacillus anthracis.